Reading from the N-terminus, the 444-residue chain is Proline--tRNA ligase (444 aa).

The protein belongs to the class-II aminoacyl-tRNA synthetase family. ProS type 2 subfamily. As to quaternary structure, homodimer.

The protein resides in the cytoplasm. The catalysed reaction is tRNA(Pro) + L-proline + ATP = L-prolyl-tRNA(Pro) + AMP + diphosphate. In terms of biological role, catalyzes the attachment of proline to tRNA(Pro) in a two-step reaction: proline is first activated by ATP to form Pro-AMP and then transferred to the acceptor end of tRNA(Pro). The polypeptide is Proline--tRNA ligase (Pelagibacter ubique (strain HTCC1062)).